We begin with the raw amino-acid sequence, 71 residues long: U3-agatoxin-Ao1a (71 aa).

The first 20 residues, 1 to 20, serve as a signal peptide directing secretion; that stretch reads MKAVIFFCLLSVMVFTVIEA. The propeptide occupies 21–33; that stretch reads VKEEGTKPAEAAR. 4 disulfide bridges follow: Cys-35/Cys-51, Cys-42/Cys-56, Cys-50/Cys-66, and Cys-58/Cys-64. A Serine amide modification is found at Ser-70.

Belongs to the neurotoxin 07 (Beta/delta-agtx) family. 01 (aga-2) subfamily. In terms of tissue distribution, expressed by the venom gland.

Its subcellular location is the secreted. Insecticidal neurotoxin that modulates the insect Nav channel (DmNaV1/tipE (para/tipE)) in a unique manner, with both the activation and inactivation processes being affected. The voltage dependence of activation is shifted toward more hyperpolarized potentials (analogous to site 4 toxins) and a non-inactivating persistent sodium current is induced (site 3-like action). Interestingly, both effects take place in a voltage-dependent manner, producing a bell-shaped curve between -80 and 0 mV. Compared to beta/delta-agatoxin-1 to -3, this toxin appears to affect the insect sodium channel only weakly. This is U3-agatoxin-Ao1a from Agelena orientalis (Funnel-web spider).